A 67-amino-acid polypeptide reads, in one-letter code: Small ribosomal subunit protein eS17 (67 aa).

Belongs to the eukaryotic ribosomal protein eS17 family.

The chain is Small ribosomal subunit protein eS17 from Pyrococcus horikoshii (strain ATCC 700860 / DSM 12428 / JCM 9974 / NBRC 100139 / OT-3).